Consider the following 93-residue polypeptide: Putative sodium channel toxin Ts41 (93 aa).

Residues 1-23 (MKIGVLFTIISMLCLLEVRKICS) form the signal peptide. Intrachain disulfides connect C22-C87, C39-C62, C48-C67, and C52-C69. Residues 26–88 (EGGYPRYFSF…FWNVYRKYCK (63 aa)) enclose the LCN-type CS-alpha/beta domain.

Belongs to the long (4 C-C) scorpion toxin superfamily. In terms of tissue distribution, expressed by the venom gland.

Its subcellular location is the secreted. In terms of biological role, the edited BmKBTx-like may modulate voltage-gated sodium channels (Nav). The non-edited form is able to form a heterodimer. In orthologs, a heterodimer with LVP beta-chain induces lipolysis in rat adipocytes, which is mediated through the beta-2 adrenergic receptor pathway (ADRB2). Since no LVP beta-chains have been identified in the venom of this scorpion, it is possible that this protein is not involved in a lipolysis process. The protein is Putative sodium channel toxin Ts41 of Tityus serrulatus (Brazilian scorpion).